Reading from the N-terminus, the 315-residue chain is Lipase 3 (315 aa).

An N-terminal signal peptide occupies residues 1–18 (MLLKRLGLAALFSLSMVG). Residue Cys19 is the site of N-palmitoyl cysteine attachment. Cys19 carries S-diacylglycerol cysteine lipidation. The AB hydrolase-1 domain maps to 69 to 296 (PLLLIHGFGG…MNDVGHVPMV (228 aa)). Residue His74 is part of the active site. Ser142 acts as the Charge relay system in catalysis.

The protein belongs to the lipase/esterase LIP3/BchO family.

Its subcellular location is the cell membrane. It catalyses the reaction a triacylglycerol + H2O = a diacylglycerol + a fatty acid + H(+). This is Lipase 3 (lip3) from Moraxella sp. (strain TA144).